The primary structure comprises 143 residues: Small ribosomal subunit protein bS6 (143 aa).

The tract at residues 98–143 is disordered; sequence TEQSLIMKSKDEKGDKPERSERRRRDDEEGEAPAANDNDGDNAEAA. Residues 105 to 124 are compositionally biased toward basic and acidic residues; it reads KSKDEKGDKPERSERRRRDD.

Belongs to the bacterial ribosomal protein bS6 family.

Functionally, binds together with bS18 to 16S ribosomal RNA. This chain is Small ribosomal subunit protein bS6, found in Xanthomonas euvesicatoria pv. vesicatoria (strain 85-10) (Xanthomonas campestris pv. vesicatoria).